A 200-amino-acid polypeptide reads, in one-letter code: Recombination protein RecR (200 aa).

The C4-type zinc finger occupies 57–72 (CDSCQNFSDTEICQIC). The 96-residue stretch at 80–175 (GTLCVVESPS…LITRLAHGIP (96 aa)) folds into the Toprim domain.

Belongs to the RecR family.

Functionally, may play a role in DNA repair. It seems to be involved in an RecBC-independent recombinational process of DNA repair. It may act with RecF and RecO. The polypeptide is Recombination protein RecR (Marinobacter nauticus (strain ATCC 700491 / DSM 11845 / VT8) (Marinobacter aquaeolei)).